We begin with the raw amino-acid sequence, 239 residues long: MIENQSDNIDNKEKDVSNQDNAPEDISSEQNSTNENDELTSQKKEAINTEELKNTISNNDARLKQLEKEHETLKNQYVRISADFDNFRKRQSRDQDDLKIQIVSKTLTAILPIVDNFERARQQLQPESEEAQALHRSYQGLYKQLVEVLKQQGVSPMRVVGQQFDPNLHEAVLREPSEESDEDFIIEELQRGYHLEGKVLRHALVKVSMGPGKQNSQQEVEKDTVEEDVNSEVNTSEDV.

2 disordered regions span residues 1-56 (MIEN…KNTI) and 208-239 (SMGPGKQNSQQEVEKDTVEEDVNSEVNTSEDV). The segment covering 40–53 (TSQKKEAINTEELK) has biased composition (basic and acidic residues). Acidic residues predominate over residues 224-239 (TVEEDVNSEVNTSEDV).

This sequence belongs to the GrpE family. In terms of assembly, homodimer.

It is found in the cytoplasm. Functionally, participates actively in the response to hyperosmotic and heat shock by preventing the aggregation of stress-denatured proteins, in association with DnaK and GrpE. It is the nucleotide exchange factor for DnaK and may function as a thermosensor. Unfolded proteins bind initially to DnaJ; upon interaction with the DnaJ-bound protein, DnaK hydrolyzes its bound ATP, resulting in the formation of a stable complex. GrpE releases ADP from DnaK; ATP binding to DnaK triggers the release of the substrate protein, thus completing the reaction cycle. Several rounds of ATP-dependent interactions between DnaJ, DnaK and GrpE are required for fully efficient folding. This chain is Protein GrpE, found in Prochlorococcus marinus (strain MIT 9215).